The primary structure comprises 443 residues: Tubulin beta chain (443 aa).

Gln11, Glu69, Ser138, Gly142, Thr143, Gly144, Asn204, and Asn226 together coordinate GTP. Residue Glu69 participates in Mg(2+) binding. A disordered region spans residues 424-443; that stretch reads QYQDASAEEEGEFEGEEEEA. The segment covering 429–443 has biased composition (acidic residues); the sequence is SAEEEGEFEGEEEEA.

This sequence belongs to the tubulin family. Dimer of alpha and beta chains. A typical microtubule is a hollow water-filled tube with an outer diameter of 25 nm and an inner diameter of 15 nM. Alpha-beta heterodimers associate head-to-tail to form protofilaments running lengthwise along the microtubule wall with the beta-tubulin subunit facing the microtubule plus end conferring a structural polarity. Microtubules usually have 13 protofilaments but different protofilament numbers can be found in some organisms and specialized cells. Mg(2+) is required as a cofactor.

Its subcellular location is the cytoplasm. The protein localises to the cytoskeleton. Tubulin is the major constituent of microtubules, a cylinder consisting of laterally associated linear protofilaments composed of alpha- and beta-tubulin heterodimers. Microtubules grow by the addition of GTP-tubulin dimers to the microtubule end, where a stabilizing cap forms. Below the cap, tubulin dimers are in GDP-bound state, owing to GTPase activity of alpha-tubulin. The sequence is that of Tubulin beta chain (TUBB) from Chlamydomonas incerta.